Reading from the N-terminus, the 544-residue chain is Methyl-accepting chemotaxis protein McpP (544 aa).

3 helical membrane passes run 12-32, 50-70, and 192-212; these read RLWL…LLML, VVQT…AGTL, and DASL…MLIA. The 55-residue stretch at 213 to 267 folds into the HAMP domain; that stretch reads RSIARPLQEAVQAMGNIASGESDLTRRLDTHGSDEITHLGEHFNRFNGKLQGVVG. One can recognise a Methyl-accepting transducer domain in the interval 272–508; it reads AAHALAQSAG…EINRNVLDTA (237 aa).

The protein belongs to the methyl-accepting chemotaxis (MCP) protein family.

The protein localises to the cell membrane. Chemotactic-signal transducers respond to changes in the concentration of attractants and repellents in the environment, transduce a signal from the outside to the inside of the cell, and facilitate sensory adaptation through the variation of the level of methylation. McpP is a chemoreceptor that responds specifically to some C2 and C3 carboxylic acids. Recognizes acetate, pyruvate, propionate, and L-lactate. This is Methyl-accepting chemotaxis protein McpP from Pseudomonas putida (strain ATCC 47054 / DSM 6125 / CFBP 8728 / NCIMB 11950 / KT2440).